Here is a 204-residue protein sequence, read N- to C-terminus: MLFGVKDIALLEHGCKALEVDSYKSLMILGIPEDCNHEEFEEIIRLPLKPLGKFEVAGKAYLEEDKSKAAIIQLTEDINYAVVPREIKGKGGVWRVVYMPRKQDIEFLTKLNLFLQSEGRTVEDMARVLRQELCPPATGPRELPARKCSVPGLGEKPEAGATVQMDVVPPLDSSEKESKAGVGKRGKRKNKKNRRRHHASDKKL.

The disordered stretch occupies residues 135-204 (PPATGPRELP…RRHHASDKKL (70 aa)). The span at 182–204 (VGKRGKRKNKKNRRRHHASDKKL) shows a compositional bias: basic residues.

This sequence belongs to the PNMA family.

The chain is Paraneoplastic antigen-like protein 8C from Homo sapiens (Human).